The following is a 111-amino-acid chain: ATP synthase subunit c (111 aa).

2 helical membrane passes run 38–58 and 89–109; these read GLGV…GSGL and AGIA…LIFV.

The protein belongs to the ATPase C chain family. As to quaternary structure, F-type ATPases have 2 components, F(1) - the catalytic core - and F(0) - the membrane proton channel. F(1) has five subunits: alpha(3), beta(3), gamma(1), delta(1), epsilon(1). F(0) has three main subunits: a(1), b(2) and c(10-14). The alpha and beta chains form an alternating ring which encloses part of the gamma chain. F(1) is attached to F(0) by a central stalk formed by the gamma and epsilon chains, while a peripheral stalk is formed by the delta and b chains.

It is found in the cell membrane. Its function is as follows. F(1)F(0) ATP synthase produces ATP from ADP in the presence of a proton or sodium gradient. F-type ATPases consist of two structural domains, F(1) containing the extramembraneous catalytic core and F(0) containing the membrane proton channel, linked together by a central stalk and a peripheral stalk. During catalysis, ATP synthesis in the catalytic domain of F(1) is coupled via a rotary mechanism of the central stalk subunits to proton translocation. In terms of biological role, key component of the F(0) channel; it plays a direct role in translocation across the membrane. A homomeric c-ring of between 10-14 subunits forms the central stalk rotor element with the F(1) delta and epsilon subunits. The polypeptide is ATP synthase subunit c (Mycoplasmopsis synoviae (strain 53) (Mycoplasma synoviae)).